The primary structure comprises 196 residues: Somatotropin (196 aa).

The N-terminal stretch at 1-16 is a signal peptide; sequence MDKVILVLLMSLGASS. Gln-17 bears the Pyrrolidone carboxylic acid mark. His-35 contacts Zn(2+). Cys-67 and Cys-169 are oxidised to a cystine. Glu-178 lines the Zn(2+) pocket. A disulfide bridge links Cys-186 with Cys-194.

It belongs to the somatotropin/prolactin family.

It is found in the secreted. In terms of biological role, growth hormone plays an important role in growth control and is involved in the regulation of several anabolic processes. Implicated as an osmoregulatory substance important for seawater adaptation. In Takifugu rubripes (Japanese pufferfish), this protein is Somatotropin (gh).